The chain runs to 534 residues: Apolipoprotein N-acyltransferase (534 aa).

Helical transmembrane passes span 8-28, 31-51, 69-89, 105-125, 127-147, 178-198, and 208-228; these read VILV…AFAV, LPPF…VWLI, AFAV…WWLG, LAIL…VALA, IFWS…GLME, VIGA…PALF, and VALA…ALYL. Residues 246–496 form the CN hydrolase domain; that stretch reads VQPDIDQAAK…TGFIDATVDS (251 aa). Glu-291 serves as the catalytic Proton acceptor. Lys-355 is a catalytic residue. The Nucleophile role is filled by Cys-408. Residues 511 to 531 form a helical membrane-spanning segment; the sequence is FWLTEALLILIALISREGFIF.

It belongs to the CN hydrolase family. Apolipoprotein N-acyltransferase subfamily.

It localises to the cell inner membrane. The catalysed reaction is N-terminal S-1,2-diacyl-sn-glyceryl-L-cysteinyl-[lipoprotein] + a glycerophospholipid = N-acyl-S-1,2-diacyl-sn-glyceryl-L-cysteinyl-[lipoprotein] + a 2-acyl-sn-glycero-3-phospholipid + H(+). The protein operates within protein modification; lipoprotein biosynthesis (N-acyl transfer). Functionally, catalyzes the phospholipid dependent N-acylation of the N-terminal cysteine of apolipoprotein, the last step in lipoprotein maturation. This Rhizobium etli (strain CIAT 652) protein is Apolipoprotein N-acyltransferase.